The sequence spans 150 residues: D-aminoacyl-tRNA deacylase (150 aa).

Residues 138-139 (GP) carry the Gly-cisPro motif, important for rejection of L-amino acids motif.

It belongs to the DTD family. In terms of assembly, homodimer.

The protein resides in the cytoplasm. The catalysed reaction is glycyl-tRNA(Ala) + H2O = tRNA(Ala) + glycine + H(+). It catalyses the reaction a D-aminoacyl-tRNA + H2O = a tRNA + a D-alpha-amino acid + H(+). In terms of biological role, an aminoacyl-tRNA editing enzyme that deacylates mischarged D-aminoacyl-tRNAs. Also deacylates mischarged glycyl-tRNA(Ala), protecting cells against glycine mischarging by AlaRS. Acts via tRNA-based rather than protein-based catalysis; rejects L-amino acids rather than detecting D-amino acids in the active site. By recycling D-aminoacyl-tRNA to D-amino acids and free tRNA molecules, this enzyme counteracts the toxicity associated with the formation of D-aminoacyl-tRNA entities in vivo and helps enforce protein L-homochirality. This is D-aminoacyl-tRNA deacylase from Dechloromonas aromatica (strain RCB).